A 274-amino-acid chain; its full sequence is UPF0173 metal-dependent hydrolase A2cp1_1196 (274 aa).

It belongs to the UPF0173 family.

This Anaeromyxobacter dehalogenans (strain 2CP-1 / ATCC BAA-258) protein is UPF0173 metal-dependent hydrolase A2cp1_1196.